Consider the following 229-residue polypeptide: Large ribosomal subunit protein uL1 (229 aa).

It belongs to the universal ribosomal protein uL1 family. As to quaternary structure, part of the 50S ribosomal subunit.

Its function is as follows. Binds directly to 23S rRNA. The L1 stalk is quite mobile in the ribosome, and is involved in E site tRNA release. Functionally, protein L1 is also a translational repressor protein, it controls the translation of the L11 operon by binding to its mRNA. The chain is Large ribosomal subunit protein uL1 from Phenylobacterium zucineum (strain HLK1).